Here is a 194-residue protein sequence, read N- to C-terminus: Endonuclease V (194 aa).

Mg(2+)-binding residues include aspartate 31 and glutamate 95.

Belongs to the endonuclease V family. Mg(2+) serves as cofactor.

The protein resides in the cytoplasm. The catalysed reaction is Endonucleolytic cleavage at apurinic or apyrimidinic sites to products with a 5'-phosphate.. Its function is as follows. DNA repair enzyme involved in the repair of deaminated bases. Selectively cleaves double-stranded DNA at the second phosphodiester bond 3' to a deoxyinosine leaving behind the intact lesion on the nicked DNA. In Pyrococcus abyssi (strain GE5 / Orsay), this protein is Endonuclease V.